The chain runs to 524 residues: Ribonuclease Y (524 aa).

Residues 3 to 23 (IVINLLLLVLAALVAFVAGFF) form a helical membrane-spanning segment. The region spanning 214–280 (ALSVVHIQSD…KLTLKKLLAD (67 aa)) is the KH domain. The region spanning 340–432 (LLQHSREVAM…VDAANTISLS (93 aa)) is the HD domain.

It belongs to the RNase Y family.

It is found in the cell membrane. Its function is as follows. Endoribonuclease that initiates mRNA decay. This is Ribonuclease Y from Chlorobium chlorochromatii (strain CaD3).